Here is a 252-residue protein sequence, read N- to C-terminus: Imidazole glycerol phosphate synthase subunit HisF (252 aa).

Catalysis depends on residues Asp-11 and Asp-130.

The protein belongs to the HisA/HisF family. In terms of assembly, heterodimer of HisH and HisF.

It localises to the cytoplasm. It carries out the reaction 5-[(5-phospho-1-deoxy-D-ribulos-1-ylimino)methylamino]-1-(5-phospho-beta-D-ribosyl)imidazole-4-carboxamide + L-glutamine = D-erythro-1-(imidazol-4-yl)glycerol 3-phosphate + 5-amino-1-(5-phospho-beta-D-ribosyl)imidazole-4-carboxamide + L-glutamate + H(+). The protein operates within amino-acid biosynthesis; L-histidine biosynthesis; L-histidine from 5-phospho-alpha-D-ribose 1-diphosphate: step 5/9. In terms of biological role, IGPS catalyzes the conversion of PRFAR and glutamine to IGP, AICAR and glutamate. The HisF subunit catalyzes the cyclization activity that produces IGP and AICAR from PRFAR using the ammonia provided by the HisH subunit. The polypeptide is Imidazole glycerol phosphate synthase subunit HisF (Bacillus licheniformis (strain ATCC 14580 / DSM 13 / JCM 2505 / CCUG 7422 / NBRC 12200 / NCIMB 9375 / NCTC 10341 / NRRL NRS-1264 / Gibson 46)).